The chain runs to 40 residues: Large ribosomal subunit protein bL36B (40 aa).

The protein belongs to the bacterial ribosomal protein bL36 family.

The polypeptide is Large ribosomal subunit protein bL36B (Kocuria rhizophila (strain ATCC 9341 / DSM 348 / NBRC 103217 / DC2201)).